The following is a 729-amino-acid chain: MAKITKEIVFGNHKLILETGEVARQADGAVMASMNGTQVLVTVVWKKDSGESNDFFPLTVNYQEKFYAIGKIPGGFNKREGRPSDNETLISRLIDRPIRPLFPDNFFNEVQIIATVLSLNPEVSPDIIAMIGASAALSISGVPFNGPIGAARVGYKDGVYLLNPSRKEQEESKLDLVIAGTKDAILMVESEAQELSEDIMRGAMLYGHEMMKSVIKSIEELAREVGKSKPEWKAPEIDTVLKARINDVARNEVEAAYLIKDKQQRYQRLDELREQTISALLAENDELNADVIANMFGELERSIVRNRILDGEPRIDGRDHRTVRPISIRTKFLERTHGSCLFTRGETQAIVVATLGNERDAQILDGISGETRDRFMLHYNFPPYSVGETGQVGSPKRREIGHGRLAKRALMAVLPDTNEFPYVLRIVSEITESNGSSSMATVCGTSLALMDAGVPLKAPVAGVAMGLIKEGDRYAVLTDILGDEDHLGDMDFKVAGTEKGITALQMDIKISGITNEIMERALEQALEGRTHILGVMNNALAEHRTELSQHAPRITTMKVAEDKIRTIIGKGGATIKGLIESTGVSIDIDDSGVIQLFSPDKMALEEAQKQIKALIAEIEVGQTYQGKVSKIVDFGAFINLLPGKDGLLHISQICAERTQKVEEVLQEGQEIEVFVAGIDKQGRVKLEWKDKPQAEAKEVEGASVSATFLTMEEQSEEINSGNKISEEEE.

Asp-485 and Asp-491 together coordinate Mg(2+). The KH domain occupies 552–611 (PRITTMKVAEDKIRTIIGKGGATIKGLIESTGVSIDIDDSGVIQLFSPDKMALEEAQKQI). An S1 motif domain is found at 621–689 (GQTYQGKVSK…KQGRVKLEWK (69 aa)). The segment at 710 to 729 (TMEEQSEEINSGNKISEEEE) is disordered.

The protein belongs to the polyribonucleotide nucleotidyltransferase family. As to quaternary structure, component of the RNA degradosome, which is a multiprotein complex involved in RNA processing and mRNA degradation. The cofactor is Mg(2+).

The protein resides in the cytoplasm. The enzyme catalyses RNA(n+1) + phosphate = RNA(n) + a ribonucleoside 5'-diphosphate. In terms of biological role, involved in mRNA degradation. Catalyzes the phosphorolysis of single-stranded polyribonucleotides processively in the 3'- to 5'-direction. This chain is Polyribonucleotide nucleotidyltransferase, found in Legionella pneumophila (strain Paris).